Here is a 311-residue protein sequence, read N- to C-terminus: S-adenosyl-L-methionine-dependent tRNA 4-demethylwyosine synthase (311 aa).

Residues Cys-26, Cys-39, Cys-52, Cys-62, Cys-66, and Cys-69 each contribute to the [4Fe-4S] cluster site. One can recognise a Radical SAM core domain in the interval 45 to 283; that stretch reads YGIETHRCIQ…LKLAKMLDEN (239 aa).

The protein belongs to the TYW1 family. Monomer. [4Fe-4S] cluster is required as a cofactor.

It is found in the cytoplasm. The enzyme catalyses N(1)-methylguanosine(37) in tRNA(Phe) + pyruvate + S-adenosyl-L-methionine = 4-demethylwyosine(37) in tRNA(Phe) + 5'-deoxyadenosine + L-methionine + CO2 + H2O. Component of the wyosine derivatives biosynthesis pathway that catalyzes the condensation of N-methylguanine with 2 carbon atoms from pyruvate to form the tricyclic 4-demethylwyosine (imG-14) on guanosine-37 of tRNA(Phe). The sequence is that of S-adenosyl-L-methionine-dependent tRNA 4-demethylwyosine synthase from Methanocaldococcus jannaschii (strain ATCC 43067 / DSM 2661 / JAL-1 / JCM 10045 / NBRC 100440) (Methanococcus jannaschii).